Reading from the N-terminus, the 96-residue chain is DNA-binding protein HmvA (96 aa).

Residues 52-55 (KTIK) form an interaction with DNA region.

It belongs to the archaeal histone HMF family. As to quaternary structure, homodimer. Dimers then assemble into higher oligomers, with the DNA wrapped around the protein core.

Its subcellular location is the cytoplasm. The protein localises to the chromosome. Binds and compact DNA (95 to 150 base pairs) to form nucleosome-like structures that contain positive DNA supercoils. Increases the resistance of DNA to thermal denaturation (in vitro). The protein is DNA-binding protein HmvA (hmvA) of Methanocaldococcus jannaschii (strain ATCC 43067 / DSM 2661 / JAL-1 / JCM 10045 / NBRC 100440) (Methanococcus jannaschii).